Consider the following 343-residue polypeptide: Thioredoxin domain-containing protein 15 (343 aa).

A signal peptide spans 1 to 20 (MQLLCWWQILLWVLGLPARG). Residues 21–304 (LEEDSGHTWQ…GPLPSTLVKT (284 aa)) are Extracellular-facing. Residues 86-95 (EDQRSTEAHD) show a composition bias toward basic and acidic residues. The tract at residues 86–112 (EDQRSTEAHDGTCSAQGDEDPRCGGRE) is disordered. The region spanning 162-279 (ERNVTGLENF…LKIFIFNQTG (118 aa)) is the Thioredoxin domain. Asparagine 170, asparagine 177, asparagine 189, and asparagine 276 each carry an N-linked (GlcNAc...) asparagine glycan. Residues 305–325 (VDWLLVFSLFFLISFIMYATI) traverse the membrane as a helical segment. Residues 326-343 (RTESIRWLIPGQEQEHAE) are Cytoplasmic-facing.

The protein localises to the cell projection. The protein resides in the cilium membrane. Its function is as follows. Acts as a positive regulator of ciliary hedgehog signaling. Required for cilia biogenesis. In Rattus norvegicus (Rat), this protein is Thioredoxin domain-containing protein 15 (Txndc15).